Consider the following 719-residue polypeptide: Polyribonucleotide nucleotidyltransferase (719 aa).

Positions 495 and 501 each coordinate Mg(2+). A KH domain is found at 562–621 (PRRLSFRIDPELIGTVIGPGGRTIKGITERTNTKIDIEDTGIVTVASHDGAAAEEAQKII). Residues 631-699 (GEYFDGKVTR…NRGRINLTLR (69 aa)) form the S1 motif domain. The segment at 699–719 (RGVPQDGSDPQPTVILPIGES) is disordered.

The protein belongs to the polyribonucleotide nucleotidyltransferase family. Mg(2+) is required as a cofactor.

The protein localises to the cytoplasm. It carries out the reaction RNA(n+1) + phosphate = RNA(n) + a ribonucleoside 5'-diphosphate. In terms of biological role, involved in mRNA degradation. Catalyzes the phosphorolysis of single-stranded polyribonucleotides processively in the 3'- to 5'-direction. In Synechococcus sp. (strain RCC307), this protein is Polyribonucleotide nucleotidyltransferase.